The primary structure comprises 380 residues: Guanine nucleotide-binding protein subunit beta (380 aa).

WD repeat units follow at residues 64–94 (GHSG…IVWN), 106–136 (LHCP…SIFN), 155–186 (GHKG…VLWD), 203–234 (GHTA…RLWD), 247–277 (GHED…RLFD), 296–326 (NELP…YVWD), and 342–372 (SHDG…KIWA).

This sequence belongs to the WD repeat G protein beta family. G proteins are composed of 3 units, alpha, beta and gamma. As to expression, present in the root, leaf and tassel.

Guanine nucleotide-binding proteins (G proteins) are involved as a modulator or transducer in various transmembrane signaling systems. The beta and gamma chains are required for the GTPase activity, for replacement of GDP by GTP, and for G protein-effector interaction. In Zea mays (Maize), this protein is Guanine nucleotide-binding protein subunit beta (GB1).